We begin with the raw amino-acid sequence, 492 residues long: Catalase isozyme 3 (492 aa).

Active-site residues include H65 and N138. Y348 contributes to the heme binding site.

Belongs to the catalase family. Homotetramer. Requires heme as cofactor.

The protein localises to the peroxisome. It catalyses the reaction 2 H2O2 = O2 + 2 H2O. Functionally, occurs in almost all aerobically respiring organisms and serves to protect cells from the toxic effects of hydrogen peroxide. The chain is Catalase isozyme 3 (CAT3) from Nicotiana plumbaginifolia (Leadwort-leaved tobacco).